A 179-amino-acid polypeptide reads, in one-letter code: Large ribosomal subunit protein uL5 (179 aa).

Belongs to the universal ribosomal protein uL5 family. In terms of assembly, part of the 50S ribosomal subunit; part of the 5S rRNA/L5/L18/L25 subcomplex. Contacts the 5S rRNA and the P site tRNA. Forms a bridge to the 30S subunit in the 70S ribosome.

This is one of the proteins that bind and probably mediate the attachment of the 5S RNA into the large ribosomal subunit, where it forms part of the central protuberance. In the 70S ribosome it contacts protein S13 of the 30S subunit (bridge B1b), connecting the 2 subunits; this bridge is implicated in subunit movement. Contacts the P site tRNA; the 5S rRNA and some of its associated proteins might help stabilize positioning of ribosome-bound tRNAs. The polypeptide is Large ribosomal subunit protein uL5 (Marinobacter nauticus (strain ATCC 700491 / DSM 11845 / VT8) (Marinobacter aquaeolei)).